The sequence spans 421 residues: Acylglycerol kinase, mitochondrial (421 aa).

Lys6 is modified (N6-acetyllysine). Positions 15 to 31 (TTAGLCLLTWGGHWLYG) are hydrophobic. One can recognise a DAGKc domain in the interval 58-199 (AQVKKATVFL…LDVLQIKGEK (142 aa)). Positions 252 to 271 (ISYTGPRERPPIEPEETPPR) are disordered.

The protein belongs to the AGK family. As to quaternary structure, component of the TIM22 complex, which core is composed of TIMM22, associated with TIMM10 (TIMM10A and/or TIMM10B), TIMM9, AGK and TIMM29. Interacts with SMIM26. The cofactor is Mg(2+). In terms of tissue distribution, ubiquitously expressed.

It is found in the mitochondrion inner membrane. Its subcellular location is the mitochondrion intermembrane space. The catalysed reaction is a monoacylglycerol + ATP = a monoacyl-sn-glycero-3-phosphate + ADP + H(+). The enzyme catalyses a 1,2-diacyl-sn-glycerol + ATP = a 1,2-diacyl-sn-glycero-3-phosphate + ADP + H(+). It catalyses the reaction an N-acylsphing-4-enine + ATP = an N-acylsphing-4-enine 1-phosphate + ADP + H(+). It carries out the reaction 1,2-di-(9Z-octadecenoyl)-sn-glycerol + ATP = 1,2-di-(9Z-octadecenoyl)-sn-glycero-3-phosphate + ADP + H(+). The catalysed reaction is 1-(9Z-octadecenoyl)-sn-glycerol + ATP = 1-(9Z-octadecenoyl)-sn-glycero-3-phosphate + ADP + H(+). The enzyme catalyses 1-(5Z,8Z,11Z,14Z-eicosatetraenoyl)-sn-glycerol + ATP = 1-(5Z,8Z,11Z,14Z-eicosatetraenoyl)-sn-glycero-3-phosphate + ADP + H(+). It catalyses the reaction a 1-acyl-sn-glycerol + ATP = a 1-acyl-sn-glycero-3-phosphate + ADP + H(+). It carries out the reaction 1-hexadecanoyl-sn-glycerol + ATP = 1-hexadecanoyl-sn-glycero-3-phosphate + ADP + H(+). The catalysed reaction is a 2-acylglycerol + ATP = a 2-acyl-sn-glycerol 3-phosphate + ADP + H(+). The enzyme catalyses 2-(5Z,8Z,11Z,14Z-eicosatetraenoyl)-glycerol + ATP = 2-(5Z,8Z,11Z,14Z-eicosatetraenoyl)-sn-glycero-3-phosphate + ADP + H(+). It catalyses the reaction N-(hexanoyl)sphing-4-enine + ATP = N-hexanoylsphing-4-enine 1-phosphate + ADP + H(+). Its pathway is lipid metabolism; glycerolipid metabolism. Both the ceramide and diacylglycerol kinase activities are inhibited by sphingosine and stimulated by cardiolipin. Both activities are stimulated by calcium when magnesium concentrations are low but inhibited by calcium when magnesium concentrations are high. In terms of biological role, lipid kinase that can phosphorylate both monoacylglycerol and diacylglycerol to form lysophosphatidic acid (LPA) and phosphatidic acid (PA), respectively. Phosphorylates ceramide but not sphingosine. Phosphorylates 1,2-dioleoylglycerol more rapidly than 2,3-dioleoylglycerol. Independently of its lipid kinase activity, acts as a component of the TIM22 complex. The TIM22 complex mediates the import and insertion of multi-pass transmembrane proteins into the mitochondrial inner membrane by forming a twin-pore translocase that uses the membrane potential as the external driving force. In the TIM22 complex, required for the import of a subset of metabolite carriers into mitochondria, such as ANT1/SLC25A4 and SLC25A24, while it is not required for the import of TIMM23. Overexpression increases the formation and secretion of LPA, resulting in transactivation of EGFR and activation of the downstream MAPK signaling pathway, leading to increased cell growth. This is Acylglycerol kinase, mitochondrial from Mus musculus (Mouse).